The primary structure comprises 915 residues: DNA repair-scaffolding protein (915 aa).

Basic residues predominate over residues 1–15 (MPRGSRARGSKRKRS). 2 disordered regions span residues 1-30 (MPRGSRARGSKRKRSWNTECPSFPGERPLQ) and 56-114 (FQNT…EDKT). Residues 56 to 65 (FQNTSGNPSL) are compositionally biased toward polar residues. Residues 67 to 85 (AEEKTITEKHLELCPRPKQ) are compositionally biased toward basic and acidic residues. The segment covering 86–107 (ETTTSKSTSGLTDITWSSSGSD) has biased composition (polar residues). Residues 151 to 450 (EISDCASCAS…GTAWTHGHKE (300 aa)) are necessary for interaction with RAD51.

Found in a complex, at least composed of BLM, RAD51 and SPIDR; the complex formation is mediated by SPIDR. Interacts (via C-terminal region) with BLM; the interaction is direct. Interacts with RAD51; the interaction is direct. Interacts (via the C-terminal region) with FIGNL1 (via N-terminal one-half region); the interaction is direct.

It is found in the nucleus. In terms of biological role, plays a role in DNA double-strand break (DBS) repair via homologous recombination (HR). Serves as a scaffolding protein that helps to promote the recruitment of DNA-processing enzymes like the helicase BLM and recombinase RAD51 to site of DNA damage, and hence contributes to maintain genomic integrity. The protein is DNA repair-scaffolding protein (SPIDR) of Homo sapiens (Human).